Here is a 74-residue protein sequence, read N- to C-terminus: Exodeoxyribonuclease 7 small subunit (74 aa).

The protein belongs to the XseB family. As to quaternary structure, heterooligomer composed of large and small subunits.

It localises to the cytoplasm. It carries out the reaction Exonucleolytic cleavage in either 5'- to 3'- or 3'- to 5'-direction to yield nucleoside 5'-phosphates.. Its function is as follows. Bidirectionally degrades single-stranded DNA into large acid-insoluble oligonucleotides, which are then degraded further into small acid-soluble oligonucleotides. In Clostridium botulinum (strain Eklund 17B / Type B), this protein is Exodeoxyribonuclease 7 small subunit.